The chain runs to 484 residues: Glutamyl-tRNA(Gln) amidotransferase subunit A (484 aa).

Active-site charge relay system residues include Lys-77 and Ser-152. The active-site Acyl-ester intermediate is Ser-176.

It belongs to the amidase family. GatA subfamily. Heterotrimer of A, B and C subunits.

The enzyme catalyses L-glutamyl-tRNA(Gln) + L-glutamine + ATP + H2O = L-glutaminyl-tRNA(Gln) + L-glutamate + ADP + phosphate + H(+). Its function is as follows. Allows the formation of correctly charged Gln-tRNA(Gln) through the transamidation of misacylated Glu-tRNA(Gln) in organisms which lack glutaminyl-tRNA synthetase. The reaction takes place in the presence of glutamine and ATP through an activated gamma-phospho-Glu-tRNA(Gln). This Pseudomonas aeruginosa (strain LESB58) protein is Glutamyl-tRNA(Gln) amidotransferase subunit A.